We begin with the raw amino-acid sequence, 212 residues long: MNPKCSLILLSGGKGERFGANQPKQYLPFQGQPLILHALNSALLIPEINEIIVVCDASYEHIFEGYSVKFAPAGMRRQDSVFSGLHHVTNPWVLVHDGVRPFIYPDEVSELIVIAQQTGAATLVSNVPYTIKQRNPVKTLDRDSLSIVHTPQCIKTEILLEGLELADREQITLVDDTQAAELLGIPVSLVSNKHPQIKITYPEDLTIAHALL.

This sequence belongs to the IspD/TarI cytidylyltransferase family. IspD subfamily.

The enzyme catalyses 2-C-methyl-D-erythritol 4-phosphate + CTP + H(+) = 4-CDP-2-C-methyl-D-erythritol + diphosphate. The protein operates within isoprenoid biosynthesis; isopentenyl diphosphate biosynthesis via DXP pathway; isopentenyl diphosphate from 1-deoxy-D-xylulose 5-phosphate: step 2/6. Its function is as follows. Catalyzes the formation of 4-diphosphocytidyl-2-C-methyl-D-erythritol from CTP and 2-C-methyl-D-erythritol 4-phosphate (MEP). This chain is 2-C-methyl-D-erythritol 4-phosphate cytidylyltransferase, found in Chlamydia felis (strain Fe/C-56) (Chlamydophila felis).